Here is a 172-residue protein sequence, read N- to C-terminus: Shikimate kinase (172 aa).

12–17 provides a ligand contact to ATP; the sequence is GSGKTS. Thr16 contributes to the Mg(2+) binding site. Substrate-binding residues include Asp34, Arg58, and Gly81. An ATP-binding site is contributed by Arg122. Residue Arg139 participates in substrate binding.

The protein belongs to the shikimate kinase family. Monomer. The cofactor is Mg(2+).

It is found in the cytoplasm. It catalyses the reaction shikimate + ATP = 3-phosphoshikimate + ADP + H(+). Its pathway is metabolic intermediate biosynthesis; chorismate biosynthesis; chorismate from D-erythrose 4-phosphate and phosphoenolpyruvate: step 5/7. In terms of biological role, catalyzes the specific phosphorylation of the 3-hydroxyl group of shikimic acid using ATP as a cosubstrate. The sequence is that of Shikimate kinase from Dictyoglomus turgidum (strain DSM 6724 / Z-1310).